The following is a 216-amino-acid chain: Chaperone protein TorD (216 aa).

It belongs to the TorD/DmsD family. TorD subfamily.

It localises to the cytoplasm. In terms of biological role, involved in the biogenesis of TorA. Acts on TorA before the insertion of the molybdenum cofactor and, as a result, probably favors a conformation of the apoenzyme that is competent for acquiring the cofactor. The sequence is that of Chaperone protein TorD from Ferrimonas balearica (strain DSM 9799 / CCM 4581 / KCTC 23876 / PAT).